The primary structure comprises 326 residues: Ribosomal RNA small subunit methyltransferase H (326 aa).

S-adenosyl-L-methionine-binding positions include 35–37 (GGY), Asp-53, Phe-80, Asp-101, and Gln-108. A disordered region spans residues 260–306 (EGVSRHLPQASNAGAGNPPPSFQAVSRRAVKPLDAETRVNPRSRSAR).

This sequence belongs to the methyltransferase superfamily. RsmH family.

Its subcellular location is the cytoplasm. It carries out the reaction cytidine(1402) in 16S rRNA + S-adenosyl-L-methionine = N(4)-methylcytidine(1402) in 16S rRNA + S-adenosyl-L-homocysteine + H(+). Specifically methylates the N4 position of cytidine in position 1402 (C1402) of 16S rRNA. The sequence is that of Ribosomal RNA small subunit methyltransferase H from Rhodospirillum rubrum (strain ATCC 11170 / ATH 1.1.1 / DSM 467 / LMG 4362 / NCIMB 8255 / S1).